The primary structure comprises 320 residues: Polycomb complex protein BMI-1-A (320 aa).

The RING-type zinc finger occupies 18-57; the sequence is CVLCGGYFIDATTIIECLHSFCKMCIVRYLETSKYCPICD. A Nuclear localization signal motif is present at residues 81-95; it reads KLVPGLFKNEMKRRR. A disordered region spans residues 234–320; the sequence is ITHPQEGLNN…ALNGSSTSSG (87 aa). The segment covering 262 to 281 has biased composition (low complexity); it reads VPSTSSPLPSPSTLVQPSQP. Residues 285–304 show a composition bias toward polar residues; sequence HISSPINGTTMTSPNRQFNF.

Component of a PRC1-like complex. Homodimer. Interacts with cbx2.

The protein localises to the nucleus. Functionally, component of a Polycomb group (PcG) multiprotein PRC1-like complex, a complex class required to maintain the transcriptionally repressive state of many genes, including Hox genes, throughout development. PcG PRC1 complex acts via chromatin remodeling and modification of histones; it mediates monoubiquitination of histone H2A 'Lys-119', rendering chromatin heritably changed in its expressibility. In the PRC1 complex, it is required to stimulate the E3 ubiquitin-protein ligase activity of rnf2. The chain is Polycomb complex protein BMI-1-A (bmi1a) from Danio rerio (Zebrafish).